The sequence spans 376 residues: Putative dihydroorotase (376 aa).

Residues His35 and His37 each contribute to the Zn(2+) site. Residues 37–39 (HVR) and Asn66 each bind substrate. Zn(2+) contacts are provided by Asp114, His138, and His187. Residue Asn230 coordinates substrate. Asp257 lines the Zn(2+) pocket. The active site involves Asp257. Residues His261 and 273–274 (YG) each bind substrate.

This sequence belongs to the metallo-dependent hydrolases superfamily. DHOase family. Class I DHOase subfamily. Requires Zn(2+) as cofactor.

It catalyses the reaction (S)-dihydroorotate + H2O = N-carbamoyl-L-aspartate + H(+). It participates in pyrimidine metabolism; UMP biosynthesis via de novo pathway; (S)-dihydroorotate from bicarbonate: step 3/3. In terms of biological role, catalyzes the reversible cyclization of carbamoyl aspartate to dihydroorotate. The protein is Putative dihydroorotase (pyrC) of Thermotoga maritima (strain ATCC 43589 / DSM 3109 / JCM 10099 / NBRC 100826 / MSB8).